Reading from the N-terminus, the 506-residue chain is NAD(P)H-quinone oxidoreductase subunit 2 (506 aa).

The next 14 membrane-spanning stretches (helical) occupy residues 14–34, 42–62, 79–99, 108–128, 132–152, 167–187, 206–226, 240–260, 276–296, 302–322, 330–350, 374–394, 409–429, and 462–482; these read AIIP…VDLA, WAPV…ALQW, LAIA…LISW, PIGE…LLCG, LVSV…LSGY, LLVG…LYGL, FITS…IAAV, PTPV…AFAI, LLFT…ALAQ, MLAY…VSGT, VLYL…VILF, LGLS…GFFG, LLVV…ISVI, and IALY…NPLF.

Belongs to the complex I subunit 2 family. NDH-1 can be composed of about 15 different subunits; different subcomplexes with different compositions have been identified which probably have different functions.

It is found in the cellular thylakoid membrane. The enzyme catalyses a plastoquinone + NADH + (n+1) H(+)(in) = a plastoquinol + NAD(+) + n H(+)(out). The catalysed reaction is a plastoquinone + NADPH + (n+1) H(+)(in) = a plastoquinol + NADP(+) + n H(+)(out). Functionally, NDH-1 shuttles electrons from an unknown electron donor, via FMN and iron-sulfur (Fe-S) centers, to quinones in the respiratory and/or the photosynthetic chain. The immediate electron acceptor for the enzyme in this species is believed to be plastoquinone. Couples the redox reaction to proton translocation, and thus conserves the redox energy in a proton gradient. Cyanobacterial NDH-1 also plays a role in inorganic carbon-concentration. The chain is NAD(P)H-quinone oxidoreductase subunit 2 from Prochlorococcus marinus subsp. pastoris (strain CCMP1986 / NIES-2087 / MED4).